Reading from the N-terminus, the 1018-residue chain is Serine/threonine-protein phosphatase BSL2 (1018 aa).

Positions 1-75 (MDEDSSMVAD…AAAVVGQEQQ (75 aa)) are disordered. The span at 41 to 57 (SPPPEGGSVPTPPPSDP) shows a compositional bias: pro residues. Residues 63–75 (QQQAAAVVGQEQQ) show a composition bias toward low complexity. 5 Kelch repeats span residues 149-195 (TSAG…VATA), 253-301 (YLMA…TASA), 306-356 (LLLL…VFVN), 362-409 (SGGA…DAAG), and 430-479 (LIFI…RLPG). The tract at residues 569–590 (DRDCGAEATPSGKPTFSLIKPD) is disordered. Position 627 is a phosphoserine (Ser627). Mn(2+) is bound by residues Asp720, His722, Asp754, and Asn786. The Proton donor role is filled by His787. Positions 839 and 918 each coordinate Mn(2+). The residue at position 975 (Ser975) is a Phosphoserine. Polar residues predominate over residues 994-1011 (ANRPATPTRGRPQNSNDR). A disordered region spans residues 994–1018 (ANRPATPTRGRPQNSNDRGGSLAWM).

This sequence belongs to the PPP phosphatase family. BSU subfamily. Interacts with BSK8. Mn(2+) serves as cofactor. Expressed throughout the plant, with a higher level in younger parts.

It localises to the cytoplasm. The protein localises to the cell membrane. The protein resides in the nucleus. The enzyme catalyses O-phospho-L-seryl-[protein] + H2O = L-seryl-[protein] + phosphate. It carries out the reaction O-phospho-L-threonyl-[protein] + H2O = L-threonyl-[protein] + phosphate. Phosphatase involved in elongation process, probably by acting as a regulator of brassinolide signaling. The sequence is that of Serine/threonine-protein phosphatase BSL2 (BSL2) from Arabidopsis thaliana (Mouse-ear cress).